The chain runs to 379 residues: Arginine biosynthesis bifunctional protein ArgJ (379 aa).

Substrate contacts are provided by Thr-140, Lys-160, Thr-171, Glu-249, Asn-374, and Thr-379. Thr-171 acts as the Nucleophile in catalysis.

The protein belongs to the ArgJ family. As to quaternary structure, heterotetramer of two alpha and two beta chains.

The protein localises to the cytoplasm. The catalysed reaction is N(2)-acetyl-L-ornithine + L-glutamate = N-acetyl-L-glutamate + L-ornithine. It carries out the reaction L-glutamate + acetyl-CoA = N-acetyl-L-glutamate + CoA + H(+). The protein operates within amino-acid biosynthesis; L-arginine biosynthesis; L-ornithine and N-acetyl-L-glutamate from L-glutamate and N(2)-acetyl-L-ornithine (cyclic): step 1/1. It participates in amino-acid biosynthesis; L-arginine biosynthesis; N(2)-acetyl-L-ornithine from L-glutamate: step 1/4. Its function is as follows. Catalyzes two activities which are involved in the cyclic version of arginine biosynthesis: the synthesis of N-acetylglutamate from glutamate and acetyl-CoA as the acetyl donor, and of ornithine by transacetylation between N(2)-acetylornithine and glutamate. The protein is Arginine biosynthesis bifunctional protein ArgJ of Archaeoglobus fulgidus (strain ATCC 49558 / DSM 4304 / JCM 9628 / NBRC 100126 / VC-16).